We begin with the raw amino-acid sequence, 179 residues long: MLGSQTKQVILGIDPGTATMGWGVVRQEGSRLRYVQHGAITTPSGWGMPRRLDRLFAGVTELIRGYRPSAVAVEELFFNTNVTTAITVGQARGVALLAAYRAGVEVFEYTPLQVKQAITSYGRADKRQVQEMVRALLGLRSIPRPDDAADGLAIAICHAFSHRMSAATGVGKPRAMQDN.

Active-site residues include Asp14, Glu74, and Asp147. Asp14, Glu74, and Asp147 together coordinate Mg(2+).

Belongs to the RuvC family. Homodimer which binds Holliday junction (HJ) DNA. The HJ becomes 2-fold symmetrical on binding to RuvC with unstacked arms; it has a different conformation from HJ DNA in complex with RuvA. In the full resolvosome a probable DNA-RuvA(4)-RuvB(12)-RuvC(2) complex forms which resolves the HJ. Mg(2+) serves as cofactor.

The protein resides in the cytoplasm. It catalyses the reaction Endonucleolytic cleavage at a junction such as a reciprocal single-stranded crossover between two homologous DNA duplexes (Holliday junction).. The RuvA-RuvB-RuvC complex processes Holliday junction (HJ) DNA during genetic recombination and DNA repair. Endonuclease that resolves HJ intermediates. Cleaves cruciform DNA by making single-stranded nicks across the HJ at symmetrical positions within the homologous arms, yielding a 5'-phosphate and a 3'-hydroxyl group; requires a central core of homology in the junction. The consensus cleavage sequence is 5'-(A/T)TT(C/G)-3'. Cleavage occurs on the 3'-side of the TT dinucleotide at the point of strand exchange. HJ branch migration catalyzed by RuvA-RuvB allows RuvC to scan DNA until it finds its consensus sequence, where it cleaves and resolves the cruciform DNA. This Rubrobacter xylanophilus (strain DSM 9941 / JCM 11954 / NBRC 16129 / PRD-1) protein is Crossover junction endodeoxyribonuclease RuvC.